Consider the following 532-residue polypeptide: Cytochrome P450 monooxygenase criE (532 aa).

Residues valine 18 to leucine 38 form a helical membrane-spanning segment. A heme-binding site is contributed by cysteine 441.

This sequence belongs to the cytochrome P450 family. It depends on heme as a cofactor.

The protein localises to the membrane. The enzyme catalyses preechinulin + reduced [NADPH--hemoprotein reductase] + O2 = neoechinulin A + oxidized [NADPH--hemoprotein reductase] + 2 H2O + H(+). It functions in the pathway secondary metabolite biosynthesis. The protein operates within alkaloid biosynthesis. In terms of biological role, cytochrome P450 monooxygenase; part of the gene cluster that mediates the biosynthesis of echinulin family alkaloid. The pathway begins with the biosynthesis of the cyclic dipeptide cyclo-L-Trp-L-Ala (cyclo-TA) by the NRPS criC via condensation of L-alanine and L-tryptophan. The prenyltransferase criA then catalyzes the first prenylation step, a reverse prenylation reaction at C2, to yield preechinulin. Preechinulin is the substrate of the cytochrome P450 monooxygenase criE that catalyzes the formation of the double bond between C10 and C11 to produce neoechulin A. The unique prenyltransferase criF functions as a competitive enzyme with criE for preechinulin metabolization and uses preechinulin for effective regiospecific prenylations. Preechinulin is prenylated by criF at C5 or C7. C7-prenylation leads to accumulation of tardioxopiperazine B without further modification by criF. In contrast, the C5-prenylated tardioxopiperazine A can be prenylated again by criF, predominantly at C7 to form echinulin or less frequently at C4 to give variecolorin L. CriF also accepts neoechilunin A to produce varlecolorin G (prenylation at C5) or isoechinulin A (prenylation at C7). CriF further converts isoechinulin A into dehydroechinulin. Moreover, a yet unidentified enzyme can also convert neoechilunin A into neoechilunin B by introducing a double bond between positions C14 and C17 and thus provides a further substrate to criF for C5 and C7 prenylation. The polypeptide is Cytochrome P450 monooxygenase criE (Aspergillus cristatus (Chinese Fuzhuan brick tea-fermentation fungus)).